A 461-amino-acid chain; its full sequence is Steroidogenic factor 1 (461 aa).

The segment at residues Asp10 to Ala85 is a DNA-binding region (nuclear receptor). The NR C4-type zinc finger occupies Cys13–Cys33. An N6-acetyllysine mark is found at Lys34, Lys38, and Lys72. The NR C4-type zinc finger occupies Cys49 to Cys73. The tract at residues Asn116 to Ala158 is disordered. Lys119 is covalently cross-linked (Glycyl lysine isopeptide (Lys-Gly) (interchain with G-Cter in SUMO)). Positions Val126 to Tyr138 are enriched in pro residues. Lys194 is covalently cross-linked (Glycyl lysine isopeptide (Lys-Gly) (interchain with G-Cter in SUMO)). Ser203 carries the post-translational modification Phosphoserine; by CDK7. Residues Gly222–Lys459 form the NR LBD domain. Residues Leu230–Thr461 are important for dimerization. 3 residues coordinate a 1,2-diacyl-sn-glycero-3-phosphocholine: Gly341, Tyr436, and Lys440.

Belongs to the nuclear hormone receptor family. NR5 subfamily. Binds DNA as a monomer. Part of a complex consisting of SFPQ, NONO and NR5A1. Interacts with NR0B2. Interacts with DGKQ and CDK7. Binds to and activated by HIPK3. In terms of processing, may be regulated by phosphorylation and dephosphorylation. Post-translationally, acetylation stimulates the transcriptional activity. Sumoylation reduces CDK7-mediated phosphorylation on Ser-203. In terms of processing, phosphorylated on Ser-203 by CDK7. This phosphorylation promotes transcriptional activity. Adrenal, ovary, testis, placenta, adipocyte, and brain.

It localises to the nucleus. In terms of biological role, transcriptional activator. Seems to be essential for sexual differentiation and formation of the primary steroidogenic tissues. Binds to the Ad4 site found in the promoter region of steroidogenic P450 genes such as CYP11A, CYP11B and CYP21B. Also regulates the AMH/Muellerian inhibiting substance gene as well as the AHCH and STAR genes. 5'-YCAAGGYC-3' and 5'-RRAGGTCA-3' are the consensus sequences for the recognition by NR5A1. The SFPQ-NONO-NR5A1 complex binds to the CYP17 promoter and regulates basal and cAMP-dependent transcriptional activity. Binds phospholipids with a phosphatidylinositol (PI) headgroup, in particular PI(3,4)P2 and PI(3,4,5)P3. Activated by the phosphorylation of NR5A1 by HIPK3 leading to increased steroidogenic gene expression upon cAMP signaling pathway stimulation. This Bos taurus (Bovine) protein is Steroidogenic factor 1 (NR5A1).